Here is a 371-residue protein sequence, read N- to C-terminus: Neuropeptide S receptor (371 aa).

The span at 1-21 (MPANFTEGSFDSSGTGQTLDS) shows a compositional bias: polar residues. Positions 1–22 (MPANFTEGSFDSSGTGQTLDSS) are disordered. Over 1 to 52 (MPANFTEGSFDSSGTGQTLDSSPVACTETVTFTEVVEGKEWGSFYYSFKTEQ) the chain is Extracellular. N-linked (GlcNAc...) asparagine glycosylation is present at N4. The chain crosses the membrane as a helical span at residues 53-73 (LITLWVLFVFTIVGNSVVLFS). The Cytoplasmic portion of the chain corresponds to 74–82 (TWRRKKKSR). The helical transmembrane segment at 83–103 (MTFFVTQLAITDSFTGLVNIL) threads the bilayer. Residues 104 to 123 (TDINWRFTGDFTAPDLVCRV) are Extracellular-facing. C121 and C197 are oxidised to a cystine. Residues 124 to 144 (VRYLQVVLLYASTYVLVSLSI) traverse the membrane as a helical segment. The Cytoplasmic portion of the chain corresponds to 145–164 (DRYHAIVYPMKFLQGEKQAR). Residues 165 to 185 (VLIVIAWSLSFLFSIPTLIIF) form a helical membrane-spanning segment. The Extracellular segment spans residues 186–212 (GKRTLSNGEVQCWALWPDDSYWTPYMT). A helical transmembrane segment spans residues 213-233 (IVAFLVYFIPLTIISIMYGIV). Residues 234-275 (IRTIWIKSKTYETVISNCSDGKLCSSYNRGLISKAKIKAIKY) lie on the Cytoplasmic side of the membrane. The helical transmembrane segment at 276 to 296 (SIIIILAFICCWSPYFLFDIL) threads the bilayer. The Extracellular segment spans residues 297–312 (DNFNLLPDTQERFYAS). A helical membrane pass occupies residues 313–333 (VIIQNLPALNSAINPLIYCVF). Residues 334 to 371 (SSSISFPCREQRSQDSRMTFRERTERHEMQILSKPEFI) are Cytoplasmic-facing.

Belongs to the G-protein coupled receptor 1 family. Vasopressin/oxytocin receptor subfamily. As to expression, isoform 4 is ubiquitous; it is detected in glandular epithelia of bronchus, stomach, small intestine, colon, uterus, esophagus, spleen, kidney, pancreas, prostate and breast. Isoform 1 is detected in uterus, colon and prostate, and in the smooth muscle cell layer in bronchial and arterial walls (at protein level). Isoform 1 is predominantly expressed in smooth muscle. Isoform 4 is predominantly expressed in epithelial cells. In bronchial biopsies, it is expressed in smooth muscle cells of asthma patients, but not in control patients; whereas in epithelial cells, its expression is consistently stronger in asthma patients.

The protein resides in the cell membrane. It localises to the cytoplasm. In terms of biological role, G-protein coupled receptor for neuropeptide S (NPS). Promotes mobilization of intracellular Ca(2+) stores. Inhibits cell growth in response to NPS binding. Involved in pathogenesis of asthma and other IgE-mediated diseases. In Homo sapiens (Human), this protein is Neuropeptide S receptor (NPSR1).